We begin with the raw amino-acid sequence, 568 residues long: Zinc finger protein 648 (568 aa).

Over residues Met-1–Gly-11 the composition is skewed to basic and acidic residues. Positions Met-1–Asp-106 are disordered. 10 consecutive C2H2-type zinc fingers follow at residues Tyr-279–His-301, Tyr-307–His-329, Tyr-335–His-358, Phe-364–His-386, Phe-392–His-414, Phe-420–His-442, Phe-448–His-470, Phe-476–His-498, Phe-504–His-526, and Tyr-532–His-554. The segment at Gln-548–Glu-568 is disordered.

The protein belongs to the krueppel C2H2-type zinc-finger protein family.

It is found in the nucleus. In terms of biological role, may be involved in transcriptional regulation. This is Zinc finger protein 648 (ZNF648) from Homo sapiens (Human).